The sequence spans 389 residues: MADPRDKALQDYRKKLLEHKEIDGRLKELREQLKELTKQYEKSENDLKALQSVGQIVGEVLKQLTEEKFIVKATNGPRYVVGCRRQLDKSKLKPGTRVALDMTTLTIMRYLPREVDPLVYNMSHEDPGNVSYSEIGGLSEQIRELREVIELPLTNPELFQRVGIIPPKGCLLYGPPGTGKTLLARAVASQLDCNFLKVVSSSIVDKYIGESARLIREMFNYARDHQPCIIFMDEIDAIGGRRFSEGTSADREIQRTLMELLNQMDGFDTLHRVKMIMATNRPDTLDPALLRPGRLDRKIHIDLPNEQARLDILKIHAGPITKHGEIDYEAIVKLSDGFNGADLRNVCTEAGMFAIRADHDFVVQEDFMKAVRKVADSKKLESKLDYKPV.

Position 72 is an N6-acetyllysine (Lys-72). 174 to 181 contributes to the ATP binding site; the sequence is GPPGTGKT. Lys-206 bears the N6-acetyllysine mark. At Ser-244 the chain carries Phosphoserine.

It belongs to the AAA ATPase family. Component of the 19S proteasome regulatory particle complex. The 26S proteasome consists of a 20S core particle (CP) and two 19S regulatory subunits (RP). The regulatory particle is made of a lid composed of 9 subunits, a base containing 6 ATPases including PSMC6 and few additional components. Interacts with PAAF1.

The protein resides in the cytoplasm. Its subcellular location is the nucleus. Component of the 26S proteasome, a multiprotein complex involved in the ATP-dependent degradation of ubiquitinated proteins. This complex plays a key role in the maintenance of protein homeostasis by removing misfolded or damaged proteins, which could impair cellular functions, and by removing proteins whose functions are no longer required. Therefore, the proteasome participates in numerous cellular processes, including cell cycle progression, apoptosis, or DNA damage repair. PSMC6 belongs to the heterohexameric ring of AAA (ATPases associated with diverse cellular activities) proteins that unfolds ubiquitinated target proteins that are concurrently translocated into a proteolytic chamber and degraded into peptides. This is 26S proteasome regulatory subunit 10B (PSMC6) from Homo sapiens (Human).